A 635-amino-acid chain; its full sequence is Rab11 family-interacting protein 4 (635 aa).

One can recognise an EF-hand domain in the interval 49-84 (GQGEEVEKLVKCLDPNDLGRINFKDFCRGVFAMKGC). Ca(2+) contacts are provided by aspartate 62, asparagine 64, arginine 68, and aspartate 73. Residues 82 to 635 (KGCEELLKDV…HNPSILEIKH (554 aa)) form a necessary for interaction with RAB11A, subcellular location, homo- or heterooligomerization region. 2 disordered regions span residues 147–176 (GPQELDMDSPMESSQGPEGSVKGCGEEKEP) and 216–258 (EDYG…QTPR). Positions 216–225 (EDYGEGDDVD) are enriched in acidic residues. A coiled-coil region spans residues 279–615 (KINLLNDLEA…EEINFRLRQY (337 aa)). One can recognise an FIP-RBD domain in the interval 572–634 (EAKNLFATQT…DHNPSILEIK (63 aa)).

In terms of assembly, homodimer. Forms a complex with Rab11 (RAB11A or RAB11B) and ARF6. Interacts with RAB11A; the interaction is direct. Forms a heterooligomeric complex with RAB11FIP2, RAB11FIP3 and RAB11FIP5. Interacts with ECPAS. In terms of tissue distribution, strongly expressed in the developing retina. Expressed predominantly in neural tissues.

The protein localises to the recycling endosome membrane. It localises to the cleavage furrow. The protein resides in the midbody. It is found in the cytoplasmic vesicle. Functionally, acts as a regulator of endocytic traffic by participating in membrane delivery. Required for the abscission step in cytokinesis, possibly by acting as an 'address tag' delivering recycling endosome membranes to the cleavage furrow during late cytokinesis. May play a role in differentiation during retinal development, in a Rab11-independent manner. The sequence is that of Rab11 family-interacting protein 4 (Rab11fip4) from Mus musculus (Mouse).